The following is a 404-amino-acid chain: uncharacterized protein (404 aa).

Disordered stretches follow at residues 261–307 and 320–340; these read VSTG…SPSL and KKSH…GGAD. A phosphoserine mark is found at S267, S276, and S279. Residues T290 and T293 each carry the phosphothreonine modification. Residues S304, S306, S324, S358, and S362 each carry the phosphoserine modification. Residues 320–336 show a composition bias toward basic and acidic residues; it reads KKSHSANDSEEFFREDD.

This is an uncharacterized protein from Homo sapiens (Human).